The chain runs to 325 residues: Quinone oxidoreductase (325 aa).

This sequence belongs to the zinc-containing alcohol dehydrogenase family. Quinone oxidoreductase subfamily.

It carries out the reaction 2 a quinone + NADPH + H(+) = 2 a 1,4-benzosemiquinone + NADP(+). This chain is Quinone oxidoreductase (qor), found in Pseudomonas aeruginosa (strain ATCC 15692 / DSM 22644 / CIP 104116 / JCM 14847 / LMG 12228 / 1C / PRS 101 / PAO1).